The following is a 239-amino-acid chain: Phospholipase A2 (239 aa).

Residues 1–19 (MSLIIVLVISVLSADAVLS) form the signal peptide. A propeptide spanning residues 20–105 (MDNELYLNLE…GRCLSVGESE (86 aa)) is cleaved from the precursor. W113, G115, and G117 together coordinate Ca(2+). Cystine bridges form between C114-C136, C135-C174, C142-C167, C165-C202, and C207-C217. Residue H139 is part of the active site. D140 lines the Ca(2+) pocket. The propeptide occupies 211 to 213 (RSP).

Belongs to the phospholipase A2 family. Group III subfamily. Heterodimer composed of a small subunit and a large subunit; disulfid-linked. Requires Ca(2+) as cofactor. In terms of tissue distribution, expressed by the venom gland.

The protein localises to the secreted. It carries out the reaction a 1,2-diacyl-sn-glycero-3-phosphocholine + H2O = a 1-acyl-sn-glycero-3-phosphocholine + a fatty acid + H(+). In terms of biological role, toxic phospholipase A2, which may catalyze the calcium-dependent hydrolysis of the 2-acyl groups in 3-sn-phosphoglycerides. Inhibits both skeletal (RYR1) and cardiac (RYR2) ryanodine receptors (calcium release channels). Probably blocks ryanodine receptors by generating a lipid product. The chain is Phospholipase A2 from Hoffmannihadrurus gertschi (Scorpion).